The primary structure comprises 184 residues: Ribosome-recycling factor (184 aa).

The segment at 141–161 is disordered; that stretch reads KKNDKAISEDDQRKGQDDVQK.

The protein belongs to the RRF family.

The protein resides in the cytoplasm. Functionally, responsible for the release of ribosomes from messenger RNA at the termination of protein biosynthesis. May increase the efficiency of translation by recycling ribosomes from one round of translation to another. The chain is Ribosome-recycling factor from Solidesulfovibrio magneticus (strain ATCC 700980 / DSM 13731 / RS-1) (Desulfovibrio magneticus).